Reading from the N-terminus, the 928-residue chain is Nitrogen network kinase 1 (928 aa).

Positions 1-12 (MFTSQRQLRQNG) are enriched in polar residues. Disordered regions lie at residues 1 to 43 (MFTS…SYGR) and 81 to 118 (HEHPSRSTLVQLQTRSQPDDVASSQVNPEGGTDDLELG). Over residues 13–29 (SPMSSSRSSQHSSGTAS) the composition is skewed to low complexity. 2 stretches are compositionally biased toward polar residues: residues 30-40 (PISDSPASNRS) and 86-107 (RSTLVQLQTRSQPDDVASSQVN). Residues Ser178 and Ser179 each carry the phosphoserine modification. The disordered stretch occupies residues 374 to 394 (ANDDNINSRNTPNNSNDTYVN). Low complexity predominate over residues 375–391 (NDDNINSRNTPNNSNDT). Phosphoserine occurs at positions 405 and 426. In terms of domain architecture, Protein kinase spans 449–912 (HRLGKIIGFG…WKLKRIEEVL (464 aa)). Residues 455 to 463 (IGFGAWGII) and Lys478 contribute to the ATP site. Residue Asp580 is the Proton acceptor of the active site. Disordered regions lie at residues 670–741 (ENRK…KYIG) and 767–813 (YDSP…SGSS). The segment covering 683–696 (VSSSSHSLKHLNQP) has biased composition (polar residues). Position 737 is a phosphoserine (Ser737). Tyr739 is subject to Phosphotyrosine. A compositionally biased stretch (low complexity) spans 769–813 (SPDSSQSEISAASSSSSNLSSLSSSTKASAVTNSGVTTSSPSGSS).

The protein belongs to the protein kinase superfamily. Ser/Thr protein kinase family. In terms of assembly, interacts with URE2 and GDH2. Also interacts with the TORC1 kinase complex.

It is found in the cytoplasm. It carries out the reaction L-seryl-[protein] + ATP = O-phospho-L-seryl-[protein] + ADP + H(+). The catalysed reaction is L-threonyl-[protein] + ATP = O-phospho-L-threonyl-[protein] + ADP + H(+). Its function is as follows. Serine/threonine-protein kinase involved in the phosphorylation of the NAD(+)-dependent glutamate dehydrogenase GDH2. When overexpressed, confers hypersensitivity to rapamycin and induces rapid nuclear accumulation of GLN3 to activate the transcription of nitrogen-regulated genes. The protein is Nitrogen network kinase 1 (NNK1) of Saccharomyces cerevisiae (strain ATCC 204508 / S288c) (Baker's yeast).